An 871-amino-acid polypeptide reads, in one-letter code: Zinc finger protein 473 (871 aa).

Residues 6 to 75 form the KRAB domain; the sequence is VTLKDVGMDF…AGGSPEATSP (70 aa). 2 disordered regions span residues 47 to 81 and 140 to 164; these read PPRP…TETK and NGES…TVST. Polar residues predominate over residues 71–81; it reads EATSPDVTETK. Over residues 145 to 154 the composition is skewed to basic and acidic residues; that stretch reads TECKSHELKR. Residue Lys-148 forms a Glycyl lysine isopeptide (Lys-Gly) (interchain with G-Cter in SUMO2) linkage. The C2H2-type 1 zinc-finger motif lies at 209–231; it reads YQCSECGKSFSGSYRLTQHWITH. The C2H2-type 2; degenerate zinc-finger motif lies at 265–286; sequence YVCNEYGTTFSQSTYLWHQKTH. Positions 290 to 317 are enriched in basic and acidic residues; sequence KPCKSQDSDHPPSHDTQPGEHQKTHTDS. A disordered region spans residues 290-318; the sequence is KPCKSQDSDHPPSHDTQPGEHQKTHTDSK. Positions 312 to 552 are interaction with SLBP/pre-mRNA complex; it reads KTHTDSKSYN…GFFVSGKILD (241 aa). C2H2-type zinc fingers lie at residues 320–342, 347–369, and 375–397; these read YNCN…QKIH, YECS…QKTH, and SECQ…QALH. The C2H2-type 6; degenerate zinc finger occupies 403-425; the sequence is YKCNERGKSFRHNSTLKIHQRVH. Lys-419 participates in a covalent cross-link: Glycyl lysine isopeptide (Lys-Gly) (interchain with G-Cter in SUMO2). C2H2-type zinc fingers lie at residues 431–453, 459–481, 487–509, and 515–537; these read YKCS…RRIH, HKCQ…QAIH, YSCA…QKMH, and YECQ…ESVH. Glycyl lysine isopeptide (Lys-Gly) (interchain with G-Cter in SUMO2) cross-links involve residues Lys-549 and Lys-558. C2H2-type zinc fingers lie at residues 562 to 584 and 591 to 613; these read FKCN…ERIH and FECD…QRIH. A Glycyl lysine isopeptide (Lys-Gly) (interchain with G-Cter in SUMO2) cross-link involves residue Lys-635. C2H2-type zinc fingers lie at residues 646–668, 674–696, 702–724, 730–752, 758–780, 786–808, 814–836, and 842–864; these read FKCN…QLIH, FKCS…ERTH, LVCN…QRIH, YVCD…QRIH, YVCQ…RRVH, YRCG…QRIH, YSCN…LRVH, and YQCQ…QRVH.

It belongs to the krueppel C2H2-type zinc-finger protein family. In terms of assembly, interacts with the SLBP/pre-mRNA complex but not with SLBP alone. Interacts with LSM11 in a U7 snRNP-dependent manner.

The protein localises to the nucleus. Functionally, involved in histone 3'-end pre-mRNA processing by associating with U7 snRNP and interacting with SLBP/pre-mRNA complex. Increases histone 3'-end pre-mRNA processing but has no effect on U7 snRNP levels, when overexpressed. Required for cell cycle progression from G1 to S phases. In Homo sapiens (Human), this protein is Zinc finger protein 473 (ZNF473).